The sequence spans 1043 residues: Rho GTPase-activating protein gacZ (1043 aa).

The tract at residues 1 to 44 (MTTTNTSIFGPRVNNSKFNNNNNNNNNNNNNNNNTSNNNNSNII) is disordered. Positions 14–44 (NNSKFNNNNNNNNNNNNNNNNTSNNNNSNII) are enriched in low complexity. Zn(2+) contacts are provided by C71, C74, C82, C85, C91, H95, H103, and C107. The segment at 71 to 107 (CVICKSKNVQVCTGCLMVYYCGAEHQNIDWPNHKSLC) adopts an MYND-type; atypical zinc-finger fold. Disordered stretches follow at residues 137–163 (SGNR…NNNN), 199–532 (HLQQ…NNSN), 546–594 (DGLS…NGNR), 614–690 (FYQS…TNNN), 706–772 (NTSQ…QLSA), and 801–842 (NKVS…NNNN). The segment covering 201 to 225 (QQQIQQTQQTQQQPPPTTTSIPTQP) has biased composition (low complexity). The segment covering 241 to 253 (SFKSSSSGDNTPI) has biased composition (polar residues). Low complexity-rich tracts occupy residues 254–293 (NQSP…NMSG) and 307–411 (NSIN…TNEE). The span at 453–466 (GTLKQSSSSDSIYF) shows a compositional bias: polar residues. 2 stretches are compositionally biased toward low complexity: residues 467–532 (NNNN…NNSN) and 547–594 (GLSY…NGNR). Positions 615–625 (YQSNKNQSNGY) are enriched in polar residues. The span at 644–671 (ENDDSHEECDDDDDDDDGGGQDGDDGLD) shows a compositional bias: acidic residues. 4 stretches are compositionally biased toward low complexity: residues 726-736 (DTQSQSTNSTT), 752-771 (SSDD…SQLS), 801-821 (NKVS…NNNN), and 829-842 (NNNN…NNNN). Residues 825–852 (DHNENNNNNNNNINNNNNNNNNNIENII) adopt a coiled-coil conformation. The Rho-GAP domain occupies 855–1043 (IPLEEAVKKS…FGIQTYNYNS (189 aa)).

It localises to the cytoplasm. Functionally, rho GTPase-activating protein involved in the signal transduction pathway. In Dictyostelium discoideum (Social amoeba), this protein is Rho GTPase-activating protein gacZ (gacZ).